The chain runs to 326 residues: Probable cell division protein WhiA (326 aa).

The H-T-H motif DNA-binding region spans 275-308 (SLDELGRLADPPMTKDAIAGRIRRLLAMADKRAL).

Belongs to the WhiA family.

In terms of biological role, involved in cell division and chromosome segregation. This Arthrobacter sp. (strain FB24) protein is Probable cell division protein WhiA.